A 457-amino-acid chain; its full sequence is Multidrug resistance protein MdtK (457 aa).

The next 12 membrane-spanning stretches (helical) occupy residues 11–31 (LLAL…MGFV), 53–73 (IWLP…PVIA), 93–113 (WLAG…GYII), 127–147 (AVGY…FQVA), 160–180 (GMVM…IFIY), 188–208 (LGGI…FIAM), 243–263 (LPIA…ALLV), 276–296 (IALN…AAVT), 314–334 (AART…IFTV), 350–370 (VVAL…SDSI), 387–407 (IFFI…YILA), and 418–438 (PAGF…LMML).

The protein belongs to the multi antimicrobial extrusion (MATE) (TC 2.A.66.1) family. MdtK subfamily.

The protein resides in the cell inner membrane. Multidrug efflux pump that functions probably as a Na(+)/drug antiporter. In Salmonella enteritidis PT4 (strain P125109), this protein is Multidrug resistance protein MdtK.